Consider the following 500-residue polypeptide: Mucin-like protein 3 (500 aa).

The signal sequence occupies residues 1 to 27 (MAQPTSGLYSTFGFFICLLFFPASWEA). Residues 28-429 (GANTFQELQK…GENNSFPVWA (402 aa)) lie on the Extracellular side of the membrane. Disordered stretches follow at residues 55–198 (THRA…SQKP) and 275–324 (EGKT…PTAS). The segment covering 58–71 (ASSDQKTSRQHPPD) has biased composition (basic and acidic residues). Residues 76 to 89 (TATQKAKNQCNTTR) are compositionally biased toward polar residues. An N-linked (GlcNAc...) asparagine glycan is attached at asparagine 108. 2 stretches are compositionally biased toward basic and acidic residues: residues 111–123 (VRHE…EKDL) and 132–142 (ARNERSADDPR). Asparagine 148 carries N-linked (GlcNAc...) asparagine glycosylation. Polar residues-rich tracts occupy residues 159–178 (PRRN…TTKS), 279–289 (SPASESSSQAQ), and 298–324 (TSAS…PTAS). Residues 430 to 450 (IVIVILMAVIILLVFIGLILL) traverse the membrane as a helical segment. Residues 451-500 (VSCASRARHVLTQNSEEPEPQPEDKGSRNSYPVYLMEQQNLNLNQIPSPP) lie on the Cytoplasmic side of the membrane.

Its subcellular location is the cell membrane. The protein localises to the cytoplasm. Functionally, may modulate NF-kappaB signaling and play a role in cell growth. This Mus musculus (Mouse) protein is Mucin-like protein 3.